The following is a 1228-amino-acid chain: MMKRYTIILAVFLLFCTVFTFQIKARPYERFADVEKPWIQKHSMDSKLVPANKGNLIQAEIVYQSVSEHSDLVISPVNEIRPANRFPSHRKSFFAENLRASPPVVPVAVDKYAVPVANPMDPENPNAWDVTLKITTKAVTVPVDVVMVIDQSSSMGGQNIARLKSAIASGQRFVKKMLPKGMATEGVRIALVSYDHEPHRLSDFTKDTAFLCQKIRALTPIWGTHTQGGLKMARNIMATSTAVDKHIILMSDGLATEQYPVKNVTTADFIGETGNANDPIDLVIQGAINFPTNYVSNNPSTPLTPNYPTHSSKVGRRNLPESKFDYSNLSARITFDGVAGALVYEPRFPHPYYYYFPCNAAINEAQFAKNSGYTIHTIGYDLGDFALANNSLKLTATDENHFFTATPANLAAAFDNIAQTINIGIQRGEVTDFVAPGFIVKNLTQSGDVTHLLNVSNGTVHYDVSTKKLTWTTGTILSSSEATITYRIYADLDYIQNNDIPVNTTSAIGPDLGGFDTNTEAKLTYTNSNGESNQQLIFPRPTVKLGYGVIKRHYVLVNKDGQPIQANGTVVSSLSEAHVLQSQDFFLPSGGGHIVPKWIKLDKTTEALQYYSVPPTNTVITTADGKRYRFVEVPGSTPNPGQIGISWKKPAGNAYFAYKLLNYWMGGTTDQQSEWDVTSNWTGAQVPLTGEDVEFATTENFGSPAVADLHVPTTNPKIIGNLINNSDKDLVVTTNSQLTINGVVEDNNPNVGTIVVKSSKDNPTGTLLFANPGYNQNVGGTVEFYNQGYDCADCGMYRRSWQYFGIPVNESGFPINDVGGNETVNQWVEPFNGDKWRPAPYAPDTKLQKFKGYQITNDVQAQPTGVYSFKGTLCVCDAFLNLTRTSGVNYSGANLIGNSYTGAIDIKQGIVFPPEVEQTVYLFNTGTRDQWRKLNGSTVSGFRAGQYLSVPKNTAGQDNLPDRIPSMHSFLVKMQNGASCTLQILYDKLLKNTTVNNGNGTQITWRSGNSGSANMPSLVMDVLGNESADRLWIFTDGGLSFGFDNGWDGRKLTEKGLSQLYAMSDIGNDKFQVAGVPELNNLLIGFDADKDGQYTLEFALSDHFAKGGVFLEDLSRGVTRRIVDGGSYSFDAKRGDSGARFRLSYDEEWVESAEVSVLVGTVGKRILITNNCEHACQANVYTTDGKLLIRLDVKPGSKSMTEPLIDGAYVVSLQSPATSSNVRKVVVN.

The signal sequence occupies residues 1–25; that stretch reads MMKRYTIILAVFLLFCTVFTFQIKA. The VWFA domain occupies 144 to 267; the sequence is DVVMVIDQSS…QYPVKNVTTA (124 aa).

In terms of assembly, minor fimbriae are composed of a structural subunit, most often Mfa1, and the accessory subunits Mfa3, Mfa4 and Mfa5. Fimbrium assembly occurs by linear, head-to-tail oligomerization of fimbrial subunits. This is mediated via insertion of a C-terminal beta-strand from one subunit into a groove in the N-terminal domain of the following subunit.

It is found in the fimbrium. Accessory subunit of the minor fimbriae. These filamentous pili are attached to the cell surface; they mediate biofilm formation, adhesion onto host cells and onto other bacteria that are part of the oral microbiome. They play an important role in invasion of periodontal tissues and are recognized as major virulence factors. Fimbrium subunits from different strains have highly divergent sequences, and this correlates with pathogenicity. The polypeptide is Minor fimbrium subunit Mfa5 (Porphyromonas gingivalis (strain ATCC 33277 / DSM 20709 / CIP 103683 / JCM 12257 / NCTC 11834 / 2561)).